The primary structure comprises 178 residues: ATP synthase subunit delta (178 aa).

This sequence belongs to the ATPase delta chain family. In terms of assembly, F-type ATPases have 2 components, F(1) - the catalytic core - and F(0) - the membrane proton channel. F(1) has five subunits: alpha(3), beta(3), gamma(1), delta(1), epsilon(1). F(0) has three main subunits: a(1), b(2) and c(10-14). The alpha and beta chains form an alternating ring which encloses part of the gamma chain. F(1) is attached to F(0) by a central stalk formed by the gamma and epsilon chains, while a peripheral stalk is formed by the delta and b chains.

The protein resides in the cell inner membrane. In terms of biological role, f(1)F(0) ATP synthase produces ATP from ADP in the presence of a proton or sodium gradient. F-type ATPases consist of two structural domains, F(1) containing the extramembraneous catalytic core and F(0) containing the membrane proton channel, linked together by a central stalk and a peripheral stalk. During catalysis, ATP synthesis in the catalytic domain of F(1) is coupled via a rotary mechanism of the central stalk subunits to proton translocation. Its function is as follows. This protein is part of the stalk that links CF(0) to CF(1). It either transmits conformational changes from CF(0) to CF(1) or is implicated in proton conduction. The sequence is that of ATP synthase subunit delta from Acinetobacter baylyi (strain ATCC 33305 / BD413 / ADP1).